The chain runs to 97 residues: Zinc metalloproteinase-disintegrin-like bothrojarin-4 (97 aa).

Residues 4 to 90 (PPVCGNYFVE…DCPTDRFRRN (87 aa)) form the Disintegrin domain. Ca(2+) is bound by residues valine 6, asparagine 9, phenylalanine 11, glutamate 13, glutamate 16, and aspartate 19. 7 cysteine pairs are disulfide-bonded: cysteine 7–cysteine 36, cysteine 18–cysteine 31, cysteine 20–cysteine 26, cysteine 30–cysteine 53, cysteine 44–cysteine 50, cysteine 49–cysteine 75, and cysteine 62–cysteine 82. An N-linked (GlcNAc...) asparagine glycan is attached at asparagine 32. The D/ECD-tripeptide; atypical (KCD) motif lies at 68–70 (KCD).

Belongs to the venom metalloproteinase (M12B) family. P-III subfamily. P-IIIa sub-subfamily. Monomer. Zn(2+) is required as a cofactor. As to expression, expressed by the venom gland.

The protein localises to the secreted. Functionally, the hemorrhagic metalloproteinase-disintegrin-like bothrojarin-1 is a potent inhibitor of collagen-induced platelet aggregation by blockage of alpha-2/beta-1 (ITGA2/ITGB1) integrin. It does not present any fibrinogen-clotting activity. This is Zinc metalloproteinase-disintegrin-like bothrojarin-4 from Bothrops jararaca (Jararaca).